The sequence spans 91 residues: MSDNNQATTNASVLTGRVVSDKMDKSITVLIERLVRHPLYGKQLRRSTKIKAHDENNVCQQGDLVRIKETRPISKTKSWTLVDVVEKVEKI.

It belongs to the universal ribosomal protein uS17 family. Part of the 30S ribosomal subunit.

One of the primary rRNA binding proteins, it binds specifically to the 5'-end of 16S ribosomal RNA. This chain is Small ribosomal subunit protein uS17, found in Psychrobacter cryohalolentis (strain ATCC BAA-1226 / DSM 17306 / VKM B-2378 / K5).